We begin with the raw amino-acid sequence, 130 residues long: Small ribosomal subunit protein uS8 (130 aa).

This sequence belongs to the universal ribosomal protein uS8 family. Part of the 30S ribosomal subunit. Contacts proteins S5 and S12.

One of the primary rRNA binding proteins, it binds directly to 16S rRNA central domain where it helps coordinate assembly of the platform of the 30S subunit. This Pectobacterium carotovorum subsp. carotovorum (strain PC1) protein is Small ribosomal subunit protein uS8.